A 147-amino-acid polypeptide reads, in one-letter code: Protein AfaD (147 aa).

Positions 1–26 (MNGSIRKMMRVTCGMLLMVMSGVSQA) are cleaved as a signal peptide. Positions 91 to 111 (RTGGDGWSPVKGEGGKGVSRP) are disordered.

It to E.coli AggB.

The protein is Protein AfaD (afaD) of Escherichia coli.